Reading from the N-terminus, the 603-residue chain is Coiled-coil domain-containing protein 148 (603 aa).

2 coiled-coil regions span residues 365–429 (LAKD…KKKK) and 461–510 (EQSL…KQVA).

The polypeptide is Coiled-coil domain-containing protein 148 (CCDC148) (Macaca fascicularis (Crab-eating macaque)).